The sequence spans 590 residues: Aspartate--tRNA(Asp/Asn) ligase (590 aa).

L-aspartate is bound at residue Glu-173. Positions Gln-197 to Lys-200 are aspartate. Residue Arg-219 coordinates L-aspartate. Residues Arg-219 to Glu-221 and Gln-228 each bind ATP. An L-aspartate-binding site is contributed by His-450. Glu-484 is an ATP binding site. Arg-491 serves as a coordination point for L-aspartate. Gly-536 to Arg-539 contributes to the ATP binding site.

The protein belongs to the class-II aminoacyl-tRNA synthetase family. Type 1 subfamily. Homodimer.

It is found in the cytoplasm. The enzyme catalyses tRNA(Asx) + L-aspartate + ATP = L-aspartyl-tRNA(Asx) + AMP + diphosphate. In terms of biological role, aspartyl-tRNA synthetase with relaxed tRNA specificity since it is able to aspartylate not only its cognate tRNA(Asp) but also tRNA(Asn). Reaction proceeds in two steps: L-aspartate is first activated by ATP to form Asp-AMP and then transferred to the acceptor end of tRNA(Asp/Asn). The polypeptide is Aspartate--tRNA(Asp/Asn) ligase (Coxiella burnetii (strain Dugway 5J108-111)).